A 627-amino-acid polypeptide reads, in one-letter code: DNA mismatch repair protein MutL (627 aa).

The segment covering 354 to 364 (DEKPPEKKVPE) has biased composition (basic and acidic residues). Positions 354-374 (DEKPPEKKVPEKSTAPSYSPM) are disordered.

The protein belongs to the DNA mismatch repair MutL/HexB family.

Its function is as follows. This protein is involved in the repair of mismatches in DNA. It is required for dam-dependent methyl-directed DNA mismatch repair. May act as a 'molecular matchmaker', a protein that promotes the formation of a stable complex between two or more DNA-binding proteins in an ATP-dependent manner without itself being part of a final effector complex. Overexpression of mutSL partially suppresses the high spontaneous mutation frequency of a ytkD/mutM/mutY triple disruption which lacks the system required to prevent damage by oxidized guanine (8-oxo-dGTP). This suggests that MutSL also functions to repair mismatches due to oxidative stress in both growing and stationary phase cells. This chain is DNA mismatch repair protein MutL, found in Bacillus subtilis (strain 168).